A 538-amino-acid chain; its full sequence is Atos homolog protein B (538 aa).

Over residues 1–18 (MRHVQAEPSPSSEPEAGP) the composition is skewed to low complexity. Disordered stretches follow at residues 1 to 103 (MRHV…GLLG), 153 to 185 (NTLH…QLHT), 197 to 300 (GGKS…VLDP), and 323 to 342 (SLRK…VPTP). Pro residues predominate over residues 227–238 (HTPPGPGPPGPC). Phosphoserine is present on residues Ser-254 and Ser-255. Low complexity predominate over residues 323–334 (SLRKGPGLLSPP). The interval 348–430 (LLGSFEESLL…VPKVGTIQVT (83 aa)) is required for macropage invasion. The interval 436 to 444 (QTVVKMFLV) is transactivation domain 1 (TAD1).

It belongs to the ATOS family.

It localises to the nucleus. Transcription regulator that may syncronize transcriptional and translational programs. This is Atos homolog protein B from Pongo abelii (Sumatran orangutan).